The sequence spans 1515 residues: Metal resistance protein YCF1 (1515 aa).

The Vacuolar segment spans residues 1 to 32 (MAGNLVSWACKLCRSPEGFGPISFYGDFTQCF). The helical transmembrane segment at 33-53 (IDGVILNLSAIFMITFGIRDL) threads the bilayer. Over 54 to 73 (VNLCKKKHSGIKYRRNWIIV) the chain is Cytoplasmic. Residues 74 to 94 (SRMALVLLEIAFVSLASLNIS) traverse the membrane as a helical segment. At 95-99 (KEEAE) the chain is on the vacuolar side. The helical transmembrane segment at 100-120 (NFTIVSQYASTMLSLFVALAL) threads the bilayer. The Cytoplasmic segment spans residues 121–130 (HWIEYDRSVV). A helical membrane pass occupies residues 131 to 151 (ANTVLLFYWLFETFGNFAKLI). At 152 to 169 (NILIRHTYEGIWYSGQTG) the chain is on the vacuolar side. A helical transmembrane segment spans residues 170–190 (FILTLFQVITCASILLLEALP). Over 191 to 278 (KKPLMPHQHI…QKSNPSLSWA (88 aa)) the chain is Cytoplasmic. Ser-251 carries the phosphoserine modification. Residues 279–299 (ICRTFGSKMLLAAFFKAIHDV) form a helical membrane-spanning segment. One can recognise an ABC transmembrane type-1 1 domain in the interval 287–590 (MLLAAFFKAI…IPMVLNSFIE (304 aa)). Topologically, residues 300–345 (LAFTQPQLLRILIKFVTDYNSERQDDHSSLQGFENNHPQKLPIVRG) are vacuolar. The helical transmembrane segment at 346–366 (FLIAFAMFLVGFTQTSVLHQY) threads the bilayer. The Cytoplasmic portion of the chain corresponds to 367-422 (FLNVFNTGMYIKSALTALIYQKSLVLSNEASGLSSTGDIVNLMSVDVQKLQDLTQW). A helical membrane pass occupies residues 423-443 (LNLIWSGPFQIIICLYSLYKL). Over 444–446 (LGN) the chain is Vacuolar. Residues 447 to 467 (SMWVGVIILVIMMPLNSFLMR) traverse the membrane as a helical segment. The Cytoplasmic segment spans residues 468–530 (IQKKLQKSQM…NLTKLGCYMA (63 aa)). Residues 531-551 (VTSFQFNIVPFLVSCCTFAVF) form a helical membrane-spanning segment. Residues 552 to 572 (VYTEDRALTTDLVFPALTLFN) are Vacuolar-facing. A helical membrane pass occupies residues 573–593 (LLSFPLMIIPMVLNSFIEASV). At 594–943 (SIGRLFTFFT…VKWNIYLEYA (350 aa)) the chain is on the cytoplasmic side. Residues 626 to 853 (INIGDDATFL…ADSPLWKLLN (228 aa)) enclose the ABC transporter 1 domain. Position 663 to 670 (663 to 670 (GKVGSGKT)) interacts with ATP. A phosphoserine mark is found at Ser-873, Ser-903, and Ser-908. Thr-911 bears the Phosphothreonine mark. Ser-914 carries the phosphoserine modification. The chain crosses the membrane as a helical span at residues 944 to 964 (KACNPKSVCVFILFIVISMFL). An ABC transmembrane type-1 2 domain is found at 951–1235 (VCVFILFIVI…IVRMTVEVET (285 aa)). Residues 965–1001 (SVMGNVWLKHWSEVNSRYGSNPNAARYLAIYFALGIG) lie on the Vacuolar side of the membrane. The helical transmembrane segment at 1002-1023 (SALATLIQTIVLWVFCTIHASK) threads the bilayer. The Cytoplasmic segment spans residues 1024-1066 (YLHNLMTNSVLRAPMTFFETTPIGRILNRFSNDIYKVDALLGR). Residues 1067 to 1087 (TFSQFFVNAVKVTFTITVICA) traverse the membrane as a helical segment. Residue Thr-1088 is a topological domain, vacuolar. The chain crosses the membrane as a helical span at residues 1089-1109 (TWQFIFIIIPLSVFYIYYQQY). Topologically, residues 1110–1180 (YLRTSRELRR…NANRWLAYRL (71 aa)) are cytoplasmic. The chain crosses the membrane as a helical span at residues 1181–1201 (ELIGSIIILGAATLSVFRLKQ). Topologically, residues 1202 to 1205 (GTLT) are vacuolar. A helical membrane pass occupies residues 1206 to 1226 (AGMVGLSLSYALQITQTLNWI). The Cytoplasmic segment spans residues 1227–1515 (VRMTVEVETN…CMEAGLVNEN (289 aa)). An ABC transporter 2 domain is found at 1272–1507 (IKFNNYSTRY…NKSLFYSLCM (236 aa)). 1306 to 1313 (GRTGAGKS) serves as a coordination point for ATP.

Belongs to the ABC transporter superfamily. ABCC family. Conjugate transporter (TC 3.A.1.208) subfamily.

The protein resides in the vacuole membrane. It carries out the reaction Cd(2+)(in) + ATP + H2O = Cd(2+)(out) + ADP + phosphate + H(+). It catalyses the reaction an S-substituted glutathione(in) + ATP + H2O = an S-substituted glutathione(out) + ADP + phosphate + H(+). Functionally, cooperates for the ATP-dependent vacuolar transport of bilirubin and glutathione conjugates. In Saccharomyces cerevisiae (strain ATCC 204508 / S288c) (Baker's yeast), this protein is Metal resistance protein YCF1 (YCF1).